A 362-amino-acid chain; its full sequence is Probable dual-specificity RNA methyltransferase RlmN (362 aa).

E105 (proton acceptor) is an active-site residue. A Radical SAM core domain is found at 111-344 (HEYGNSICVT…VTIRREQGHD (234 aa)). A disulfide bond links C118 and C349. [4Fe-4S] cluster-binding residues include C125, C129, and C132. S-adenosyl-L-methionine contacts are provided by residues 175-176 (GE), S207, 230-232 (SLH), and N306. C349 (S-methylcysteine intermediate) is an active-site residue.

The protein belongs to the radical SAM superfamily. RlmN family. [4Fe-4S] cluster serves as cofactor.

The protein localises to the cytoplasm. The enzyme catalyses adenosine(2503) in 23S rRNA + 2 reduced [2Fe-2S]-[ferredoxin] + 2 S-adenosyl-L-methionine = 2-methyladenosine(2503) in 23S rRNA + 5'-deoxyadenosine + L-methionine + 2 oxidized [2Fe-2S]-[ferredoxin] + S-adenosyl-L-homocysteine. It carries out the reaction adenosine(37) in tRNA + 2 reduced [2Fe-2S]-[ferredoxin] + 2 S-adenosyl-L-methionine = 2-methyladenosine(37) in tRNA + 5'-deoxyadenosine + L-methionine + 2 oxidized [2Fe-2S]-[ferredoxin] + S-adenosyl-L-homocysteine. In terms of biological role, specifically methylates position 2 of adenine 2503 in 23S rRNA and position 2 of adenine 37 in tRNAs. This chain is Probable dual-specificity RNA methyltransferase RlmN, found in Bacillus cereus (strain B4264).